A 428-amino-acid polypeptide reads, in one-letter code: Phosphoglucosamine mutase (428 aa).

Catalysis depends on Ser-96, which acts as the Phosphoserine intermediate. Ser-96, Asp-229, Asp-231, and Asp-233 together coordinate Mg(2+). Ser-96 is modified (phosphoserine).

It belongs to the phosphohexose mutase family. It depends on Mg(2+) as a cofactor. In terms of processing, activated by phosphorylation.

The catalysed reaction is alpha-D-glucosamine 1-phosphate = D-glucosamine 6-phosphate. Catalyzes the conversion of glucosamine-6-phosphate to glucosamine-1-phosphate. The polypeptide is Phosphoglucosamine mutase (Thermotoga neapolitana (strain ATCC 49049 / DSM 4359 / NBRC 107923 / NS-E)).